A 178-amino-acid polypeptide reads, in one-letter code: Gamma-crystallin S (178 aa).

N-acetylserine is present on S2. The tract at residues 2 to 5 is N-terminal arm; it reads SKTG. Beta/gamma crystallin 'Greek key' domains are found at residues 6 to 44 and 45 to 87; these read TKIT…KVEG and GTWA…RAVH. The connecting peptide stretch occupies residues 88 to 93; the sequence is LPSGGQ. Beta/gamma crystallin 'Greek key' domains lie at 94-134 and 135-177; these read YKIQ…KVLE and GVWI…RRIV.

The protein belongs to the beta/gamma-crystallin family. Monomer.

Functionally, crystallins are the dominant structural components of the vertebrate eye lens. In Homo sapiens (Human), this protein is Gamma-crystallin S (CRYGS).